Consider the following 151-residue polypeptide: Brain ribonuclease (151 aa).

The interval 1-25 (KESAAAKFRRQHMDAGSSSSGNSNY) is disordered. 2 residues coordinate substrate: lysine 7 and arginine 10. The active-site Proton acceptor is the histidine 12. 4 cysteine pairs are disulfide-bonded: cysteine 26–cysteine 84, cysteine 40–cysteine 95, cysteine 58–cysteine 110, and cysteine 65–cysteine 72. Position 41 to 45 (41 to 45 (KPVNT)) interacts with substrate. Asparagine 62 carries N-linked (GlcNAc...) asparagine glycosylation. Substrate contacts are provided by lysine 66 and arginine 85. Histidine 119 serves as the catalytic Proton donor. Threonine 129 is a glycosylation site (O-linked (GalNAc...) threonine). Serine 133 carries O-linked (GalNAc...) serine glycosylation.

This sequence belongs to the pancreatic ribonuclease family.

Its subcellular location is the secreted. This chain is Brain ribonuclease (BRN), found in Axis porcinus (Hog deer).